Reading from the N-terminus, the 151-residue chain is UPF0208 membrane protein NT01EI_2692 (151 aa).

2 helical membrane passes run 46 to 65 and 69 to 91; these read FAIRFMPPIAMFTLCWQIAL and LGPAIATALFACSLPMQGLWWLG.

Belongs to the UPF0208 family.

The protein localises to the cell inner membrane. The polypeptide is UPF0208 membrane protein NT01EI_2692 (Edwardsiella ictaluri (strain 93-146)).